A 483-amino-acid polypeptide reads, in one-letter code: Type 2 glycosyltransferase (483 aa).

Residues 21 to 41 (AVVYLSALFTPWFTAFCVLWL) traverse the membrane as a helical segment. The Dxd motif signature appears at 156–158 (DDD). A QxxxRW motif motif is present at residues 301–305 (QCSRW). Asparagine 313 carries N-linked (GlcNAc...) asparagine glycosylation. The next 3 helical transmembrane spans lie at 336-356 (IATF…ALWW), 369-389 (AIYA…VGLF), and 396-416 (IMFL…KIYA). Asparagine 421 carries an N-linked (GlcNAc...) asparagine glycan.

Belongs to the GT2 glycosyltransferase family.

It localises to the cell membrane. In terms of biological role, glycosyltransferase that plays an important role in infection-related morphogenesis and pathogenesis. Involved in stress tolerance and hyphal hydrophobicity via its regulation of the expression of nydrophobin MPG1. May regulate growth, pathogenicity, and cell wall integrity (CWI) through glycosylation of heat shock protein SSB1, and other (unidentified) substrates may contribute to conidiation. Candidate proteins as potential substrates of GT2 include several heat shock proteins (SSB1/MGG_02503, MGG_06759 and MGG_06958), two coiled-coil domain-containing proteins (MGG_04321 and MGG_09571), aminopeptidase 2 (MGG_16472), and a nuclease domain-containing protein (MGG_12646). This chain is Type 2 glycosyltransferase, found in Pyricularia oryzae (strain 70-15 / ATCC MYA-4617 / FGSC 8958) (Rice blast fungus).